The primary structure comprises 268 residues: Glutamate racemase (268 aa).

Substrate is bound by residues 10-11 and 42-43; these read DS and YG. The active-site Proton donor/acceptor is the cysteine 73. Residue 74 to 75 participates in substrate binding; that stretch reads NT. The active-site Proton donor/acceptor is the cysteine 184. Position 185 to 186 (185 to 186) interacts with substrate; sequence TH.

It belongs to the aspartate/glutamate racemases family.

It catalyses the reaction L-glutamate = D-glutamate. Its pathway is cell wall biogenesis; peptidoglycan biosynthesis. Its function is as follows. Provides the (R)-glutamate required for cell wall biosynthesis. This is Glutamate racemase from Carnobacterium sp. (strain St2).